The sequence spans 370 residues: uncharacterized protein (370 aa).

Belongs to the metallo-dependent hydrolases superfamily.

This is an uncharacterized protein from Mycobacterium bovis (strain ATCC BAA-935 / AF2122/97).